Reading from the N-terminus, the 762-residue chain is Hyperosmolality-gated Ca2+ permeable channel 2.2 (762 aa).

Helical transmembrane passes span 3–23 (VSAL…LVSL), 90–110 (MVIC…AFVL), 144–164 (LWVH…LLYF), 354–374 (IATL…VTFV), 402–422 (VITG…VPPL), 445–465 (KILY…GSVI), 500–520 (GWAG…NLIA), 557–577 (VIAP…YLIY), 594–614 (QYWP…QVIA), and 615–635 (LGFF…PLIL).

Belongs to the CSC1 (TC 1.A.17) family.

It localises to the membrane. In terms of biological role, acts as an osmosensitive calcium-permeable cation channel. The chain is Hyperosmolality-gated Ca2+ permeable channel 2.2 from Arabidopsis thaliana (Mouse-ear cress).